The sequence spans 230 residues: Transcriptional regulatory protein CitT (230 aa).

The region spanning 6–124 (KVLIIEDDFR…VLHQRLDAYV (119 aa)) is the Response regulatory domain. Residue Asp-59 is modified to 4-aspartylphosphate. Residues 184 to 203 (AMEGARLIGASRSTVRRYFE) constitute a DNA-binding region (H-T-H motif).

In terms of processing, phosphorylated by CitS.

It is found in the cytoplasm. In terms of biological role, member of the two-component regulatory system CitT/CitS. The polypeptide is Transcriptional regulatory protein CitT (citT) (Halalkalibacterium halodurans (strain ATCC BAA-125 / DSM 18197 / FERM 7344 / JCM 9153 / C-125) (Bacillus halodurans)).